The sequence spans 367 residues: UDP-N-acetylglucosamine--N-acetylmuramyl-(pentapeptide) pyrophosphoryl-undecaprenol N-acetylglucosamine transferase (367 aa).

Residues 18-20 (TGG), Asn130, Arg170, Ser196, Ile252, 271-276 (ALTVSE), and Gln297 each bind UDP-N-acetyl-alpha-D-glucosamine.

Belongs to the glycosyltransferase 28 family. MurG subfamily.

The protein resides in the cell inner membrane. It catalyses the reaction di-trans,octa-cis-undecaprenyl diphospho-N-acetyl-alpha-D-muramoyl-L-alanyl-D-glutamyl-meso-2,6-diaminopimeloyl-D-alanyl-D-alanine + UDP-N-acetyl-alpha-D-glucosamine = di-trans,octa-cis-undecaprenyl diphospho-[N-acetyl-alpha-D-glucosaminyl-(1-&gt;4)]-N-acetyl-alpha-D-muramoyl-L-alanyl-D-glutamyl-meso-2,6-diaminopimeloyl-D-alanyl-D-alanine + UDP + H(+). Its pathway is cell wall biogenesis; peptidoglycan biosynthesis. Cell wall formation. Catalyzes the transfer of a GlcNAc subunit on undecaprenyl-pyrophosphoryl-MurNAc-pentapeptide (lipid intermediate I) to form undecaprenyl-pyrophosphoryl-MurNAc-(pentapeptide)GlcNAc (lipid intermediate II). In Shewanella frigidimarina (strain NCIMB 400), this protein is UDP-N-acetylglucosamine--N-acetylmuramyl-(pentapeptide) pyrophosphoryl-undecaprenol N-acetylglucosamine transferase.